The following is a 238-amino-acid chain: Thiamine import ATP-binding protein ThiQ (238 aa).

In terms of domain architecture, ABC transporter spans 2–230; that stretch reads LALDKVRYEY…HPHPELAQFV (229 aa). Residue 32 to 39 participates in ATP binding; that stretch reads GPSGAGKS.

It belongs to the ABC transporter superfamily. Thiamine importer (TC 3.A.1.19.1) family. As to quaternary structure, the complex is composed of two ATP-binding proteins (ThiQ), two transmembrane proteins (ThiP) and a solute-binding protein (ThiB).

The protein resides in the cell inner membrane. The catalysed reaction is thiamine(out) + ATP + H2O = thiamine(in) + ADP + phosphate + H(+). Functionally, part of the ABC transporter complex ThiBPQ involved in thiamine import. Responsible for energy coupling to the transport system. The sequence is that of Thiamine import ATP-binding protein ThiQ from Vibrio cholerae serotype O1 (strain ATCC 39315 / El Tor Inaba N16961).